Reading from the N-terminus, the 571-residue chain is 15-cis-phytoene desaturase, chloroplastic/chromoplastic (571 aa).

The transit peptide at 1–96 directs the protein to the chloroplast and chromoplast; sequence MDTGCLSSMN…FRNSERPSKP (96 aa). Residues alanine 107, 126 to 127, lysine 134, 151 to 152, and tyrosine 157 contribute to the FAD site; these read EA and HI. Arginine 292 is a binding site for substrate. 2 residues coordinate FAD: isoleucine 334 and aspartate 523. A substrate-binding site is contributed by alanine 531. Position 533 (methionine 533) interacts with FAD.

This sequence belongs to the carotenoid/retinoid oxidoreductase family. In terms of assembly, homotetramer. It depends on FAD as a cofactor.

The protein localises to the plastid. The protein resides in the chloroplast. Its subcellular location is the chromoplast. It localises to the membrane. It carries out the reaction 2 a plastoquinone + 15-cis-phytoene = 9,9',15-tri-cis-zeta-carotene + 2 a plastoquinol. It functions in the pathway carotenoid biosynthesis; lycopene biosynthesis. Its function is as follows. Converts phytoene into zeta-carotene via the intermediary of phytofluene by the symmetrical introduction of two double bonds at the C-11 and C-11' positions of phytoene with a concomitant isomerization of two neighboring double bonds at the C9 and C9' positions from trans to cis. In Zea mays (Maize), this protein is 15-cis-phytoene desaturase, chloroplastic/chromoplastic (PDS1).